We begin with the raw amino-acid sequence, 423 residues long: Histidine--tRNA ligase (423 aa).

Belongs to the class-II aminoacyl-tRNA synthetase family. Homodimer.

The protein localises to the cytoplasm. It catalyses the reaction tRNA(His) + L-histidine + ATP = L-histidyl-tRNA(His) + AMP + diphosphate + H(+). The sequence is that of Histidine--tRNA ligase from Haemophilus influenzae (strain 86-028NP).